The following is a 170-amino-acid chain: Adenine phosphoribosyltransferase (170 aa).

Belongs to the purine/pyrimidine phosphoribosyltransferase family. Homodimer.

Its subcellular location is the cytoplasm. The catalysed reaction is AMP + diphosphate = 5-phospho-alpha-D-ribose 1-diphosphate + adenine. It participates in purine metabolism; AMP biosynthesis via salvage pathway; AMP from adenine: step 1/1. Its function is as follows. Catalyzes a salvage reaction resulting in the formation of AMP, that is energically less costly than de novo synthesis. The polypeptide is Adenine phosphoribosyltransferase (Streptococcus pneumoniae (strain Taiwan19F-14)).